A 409-amino-acid polypeptide reads, in one-letter code: tRNA-specific 2-thiouridylase MnmA (409 aa).

Residues 40-47 (GLSGGVDS) and leucine 66 contribute to the ATP site. Catalysis depends on cysteine 127, which acts as the Nucleophile. Cysteine 127 and cysteine 237 are joined by a disulfide. Glycine 152 is a binding site for ATP. The interaction with tRNA stretch occupies residues 187-189 (KDQ). The active-site Cysteine persulfide intermediate is cysteine 237. The tract at residues 342–343 (RY) is interaction with tRNA.

This sequence belongs to the MnmA/TRMU family.

The protein resides in the cytoplasm. The enzyme catalyses S-sulfanyl-L-cysteinyl-[protein] + uridine(34) in tRNA + AH2 + ATP = 2-thiouridine(34) in tRNA + L-cysteinyl-[protein] + A + AMP + diphosphate + H(+). Functionally, catalyzes the 2-thiolation of uridine at the wobble position (U34) of tRNA, leading to the formation of s(2)U34. The chain is tRNA-specific 2-thiouridylase MnmA from Prochlorococcus marinus (strain MIT 9313).